The sequence spans 337 residues: NADH-quinone oxidoreductase subunit H (337 aa).

8 helical membrane passes run 9–29 (FAKI…FTYV), 77–97 (FLIA…VIPF), 110–130 (LLYI…AGWA), 154–174 (MGFA…SGIV), 181–201 (FWEW…ISGV), 229–249 (MAFA…SFLA), 274–294 (VPGI…YLWF), and 313–333 (VLIP…YGGV).

Belongs to the complex I subunit 1 family. In terms of assembly, NDH-1 is composed of 14 different subunits. Subunits NuoA, H, J, K, L, M, N constitute the membrane sector of the complex.

It is found in the cell inner membrane. The enzyme catalyses a quinone + NADH + 5 H(+)(in) = a quinol + NAD(+) + 4 H(+)(out). Functionally, NDH-1 shuttles electrons from NADH, via FMN and iron-sulfur (Fe-S) centers, to quinones in the respiratory chain. The immediate electron acceptor for the enzyme in this species is believed to be ubiquinone. Couples the redox reaction to proton translocation (for every two electrons transferred, four hydrogen ions are translocated across the cytoplasmic membrane), and thus conserves the redox energy in a proton gradient. This subunit may bind ubiquinone. The polypeptide is NADH-quinone oxidoreductase subunit H (Halorhodospira halophila (strain DSM 244 / SL1) (Ectothiorhodospira halophila (strain DSM 244 / SL1))).